A 354-amino-acid chain; its full sequence is Homeobox-leucine zipper protein HOX27 (354 aa).

The tract at residues 98-175 (SVAAGAPGME…DDEGASARKK (78 aa)) is disordered. Over residues 148 to 157 (QGGGGGGGGE) the composition is skewed to gly residues. Residues 171–230 (SARKKLRLSKEQSAFLEESFKEHSTLNPKQKVALAKQLNLRPRQVEVWFQNRRARTKLKQ) constitute a DNA-binding region (homeobox). The interval 229–273 (KQTEVDCEYLKRCCETLTEENRRLHKELAELRALKTARPFYMHLP) is leucine-zipper. A disordered region spans residues 294 to 323 (STSAPAAATSPAAAPTAAARTAVASPEPHR).

It belongs to the HD-ZIP homeobox family. Class II subfamily. In terms of tissue distribution, expressed in seedlings, roots, stems, leaf sheaths and blades and panicles.

Its subcellular location is the nucleus. Its function is as follows. Probable transcription factor. The polypeptide is Homeobox-leucine zipper protein HOX27 (HOX27) (Oryza sativa subsp. indica (Rice)).